A 271-amino-acid chain; its full sequence is MNWSVFEGLLSGVNKYSTAFGRIWLSLVFVFRVLVYLVTAERVWGDDQKDFDCNTRQPGCTNVCYDEFFPVSHVRLWALQLILVTCPSLLVVMHVAYRKAREKKYQQEVGKGYLYPNPGKKRGGLWWTYVCSLLFKATIDIIFLYLFHAFYPRYTLPSMVKCHSAPCPNTVDCFIAKPSEKNIFIVFMLVTAIVCILLNLVELLYLVIKRCSECAPAKRPPTAHAKNDPNWANPSSKEKDFLSSDLIFLGSDTHPPLLPDRPRAHVKKTIL.

Topologically, residues 1–20 (MNWSVFEGLLSGVNKYSTAF) are cytoplasmic. A helical membrane pass occupies residues 21 to 40 (GRIWLSLVFVFRVLVYLVTA). Residues 41–75 (ERVWGDDQKDFDCNTRQPGCTNVCYDEFFPVSHVR) are Extracellular-facing. Residues 76-98 (LWALQLILVTCPSLLVVMHVAYR) form a helical membrane-spanning segment. Over 99 to 124 (KAREKKYQQEVGKGYLYPNPGKKRGG) the chain is Cytoplasmic. Residues 125–147 (LWWTYVCSLLFKATIDIIFLYLF) form a helical membrane-spanning segment. At 148–182 (HAFYPRYTLPSMVKCHSAPCPNTVDCFIAKPSEKN) the chain is on the extracellular side. Residues 183–205 (IFIVFMLVTAIVCILLNLVELLY) traverse the membrane as a helical segment. Residues 206–271 (LVIKRCSECA…PRAHVKKTIL (66 aa)) lie on the Cytoplasmic side of the membrane. The interval 217-237 (AKRPPTAHAKNDPNWANPSSK) is disordered.

The protein belongs to the connexin family. Beta-type (group I) subfamily. A connexon is composed of a hexamer of connexins. As to expression, expressed in skin.

The protein localises to the cell membrane. Its subcellular location is the cell junction. It is found in the gap junction. In terms of biological role, one gap junction consists of a cluster of closely packed pairs of transmembrane channels, the connexons, through which materials of low MW diffuse from one cell to a neighboring cell. In Rattus norvegicus (Rat), this protein is Gap junction beta-5 protein (Gjb5).